A 181-amino-acid chain; its full sequence is Cytochrome b6-f complex iron-sulfur subunit (181 aa).

The segment at 1-35 is disordered; that stretch reads MAQTGNFKSPARMSSLGQGAAPASSGAVTGGKPRE. The next 2 membrane-spanning stretches (helical) occupy residues 53 to 73 and 114 to 134; these read VGGV…KYII and GGAL…VNWV. The 94-residue stretch at 85–178 folds into the Rieske domain; it reads LTVGKASEVP…ARIEGDSIII (94 aa). The [2Fe-2S] cluster site is built by C124, H126, C142, and H145. C129 and C144 are disulfide-bonded.

The protein belongs to the Rieske iron-sulfur protein family. [2Fe-2S] cluster is required as a cofactor.

Its subcellular location is the cell inner membrane. The catalysed reaction is 2 oxidized [plastocyanin] + a plastoquinol + 2 H(+)(in) = 2 reduced [plastocyanin] + a plastoquinone + 4 H(+)(out). Component of the green S-bacteria bc-complex which consists of the Rieske protein and cytochrome b subunit and which appears to lack a cytochrome c1-equivalent. This complex has a comparatively low redox potential. The polypeptide is Cytochrome b6-f complex iron-sulfur subunit (petC) (Chlorobaculum thiosulfatiphilum (Chlorobium limicola f.sp. thiosulfatophilum)).